A 274-amino-acid chain; its full sequence is Diaminopimelate epimerase (274 aa).

Substrate contacts are provided by asparagine 11, glutamine 44, and asparagine 64. Cysteine 73 acts as the Proton donor in catalysis. Substrate contacts are provided by residues 74-75, asparagine 157, asparagine 190, and 208-209; these read GN and ER. Cysteine 217 serves as the catalytic Proton acceptor. A substrate-binding site is contributed by 218-219; that stretch reads GS.

The protein belongs to the diaminopimelate epimerase family. In terms of assembly, homodimer.

It localises to the cytoplasm. It catalyses the reaction (2S,6S)-2,6-diaminopimelate = meso-2,6-diaminopimelate. The protein operates within amino-acid biosynthesis; L-lysine biosynthesis via DAP pathway; DL-2,6-diaminopimelate from LL-2,6-diaminopimelate: step 1/1. Catalyzes the stereoinversion of LL-2,6-diaminopimelate (L,L-DAP) to meso-diaminopimelate (meso-DAP), a precursor of L-lysine and an essential component of the bacterial peptidoglycan. This chain is Diaminopimelate epimerase, found in Haemophilus ducreyi (strain 35000HP / ATCC 700724).